A 133-amino-acid chain; its full sequence is Ribonuclease P protein component (133 aa).

The protein belongs to the RnpA family. As to quaternary structure, consists of a catalytic RNA component (M1 or rnpB) and a protein subunit.

It catalyses the reaction Endonucleolytic cleavage of RNA, removing 5'-extranucleotides from tRNA precursor.. RNaseP catalyzes the removal of the 5'-leader sequence from pre-tRNA to produce the mature 5'-terminus. It can also cleave other RNA substrates such as 4.5S RNA. The protein component plays an auxiliary but essential role in vivo by binding to the 5'-leader sequence and broadening the substrate specificity of the ribozyme. This chain is Ribonuclease P protein component, found in Corynebacterium efficiens (strain DSM 44549 / YS-314 / AJ 12310 / JCM 11189 / NBRC 100395).